The sequence spans 404 residues: Serine/threonine transporter SstT (404 aa).

The next 9 helical transmembrane spans lie at 12–32 (GGNL…LALV), 53–73 (AIAP…KEVG), 81–101 (ILVM…VLSF), 140–160 (ALAN…GIAL), 177–197 (AVSF…FGLV), 216–236 (LGVL…LIVF), 287–307 (VAIP…VTVL), 329–349 (IVAS…LLLI), and 356–376 (FNIP…IGVI).

The protein belongs to the dicarboxylate/amino acid:cation symporter (DAACS) (TC 2.A.23) family.

The protein resides in the cell inner membrane. It catalyses the reaction L-serine(in) + Na(+)(in) = L-serine(out) + Na(+)(out). The enzyme catalyses L-threonine(in) + Na(+)(in) = L-threonine(out) + Na(+)(out). Involved in the import of serine and threonine into the cell, with the concomitant import of sodium (symport system). This chain is Serine/threonine transporter SstT, found in Actinobacillus pleuropneumoniae serotype 7 (strain AP76).